The following is a 122-amino-acid chain: Small ribosomal subunit protein uS12 (122 aa).

The interval Met1–Pro45 is disordered. Residues Lys18 to Pro28 show a composition bias toward polar residues. At Asp89 the chain carries 3-methylthioaspartic acid.

It belongs to the universal ribosomal protein uS12 family. Part of the 30S ribosomal subunit. Contacts proteins S8 and S17. May interact with IF1 in the 30S initiation complex.

In terms of biological role, with S4 and S5 plays an important role in translational accuracy. Functionally, interacts with and stabilizes bases of the 16S rRNA that are involved in tRNA selection in the A site and with the mRNA backbone. Located at the interface of the 30S and 50S subunits, it traverses the body of the 30S subunit contacting proteins on the other side and probably holding the rRNA structure together. The combined cluster of proteins S8, S12 and S17 appears to hold together the shoulder and platform of the 30S subunit. The protein is Small ribosomal subunit protein uS12 of Rubrobacter xylanophilus (strain DSM 9941 / JCM 11954 / NBRC 16129 / PRD-1).